A 440-amino-acid chain; its full sequence is Zinc finger MYND domain-containing protein 10 (440 aa).

Cys394, Cys397, Cys405, Cys408, Cys414, Cys418, His426, and Cys430 together coordinate Zn(2+). The MYND-type zinc finger occupies 394–430 (CGYCNAEASKRCSRCQNVWYCCRECQVKHWEKHGKTC).

It belongs to the ZMYND10 family. In terms of assembly, interacts (via C-terminus) with DNAAF11 (via CS domain); this interaction stabilizes DNAAF11 at the protein level. Interacts (via C-terminus) with DNAL1; this interaction stabilizes DNAL1 at the protein level. Interacts with DNAAF4, HSPA8, IQUB, RUVBL2 and DYNTL5. As to expression, expressed in the testis. Expressed in the tracheal epithelium. Restricted to regions containing motile cilia.

The protein localises to the cytoplasm. It localises to the cytoskeleton. Its subcellular location is the microtubule organizing center. The protein resides in the centrosome. It is found in the centriolar satellite. The protein localises to the apical cell membrane. It localises to the dynein axonemal particle. In terms of biological role, plays a role in axonemal structure organization and motility. Involved in axonemal pre-assembly of inner and outer dynein arms (IDA and ODA, respectively) for proper axoneme building for cilia motility. May act by indirectly regulating transcription of dynein proteins. The polypeptide is Zinc finger MYND domain-containing protein 10 (Zmynd10) (Mus musculus (Mouse)).